Here is a 483-residue protein sequence, read N- to C-terminus: Siroheme synthase (483 aa).

A precorrin-2 dehydrogenase /sirohydrochlorin ferrochelatase region spans residues 1-203 (MNYFPIFANL…RQNTLAEREL (203 aa)). Residues 22–23 (AV) and 43–44 (KH) each bind NAD(+). S128 is subject to Phosphoserine. The interval 217-483 (GSVSLVGAGP…GGLNAGQRAA (267 aa)) is uroporphyrinogen-III C-methyltransferase. An S-adenosyl-L-methionine-binding site is contributed by P226. D249 (proton acceptor) is an active-site residue. K271 functions as the Proton donor in the catalytic mechanism. S-adenosyl-L-methionine is bound by residues 302-304 (GGD), V307, 332-333 (TA), M384, and G413.

It in the N-terminal section; belongs to the precorrin-2 dehydrogenase / sirohydrochlorin ferrochelatase family. The protein in the C-terminal section; belongs to the precorrin methyltransferase family.

The catalysed reaction is uroporphyrinogen III + 2 S-adenosyl-L-methionine = precorrin-2 + 2 S-adenosyl-L-homocysteine + H(+). It catalyses the reaction precorrin-2 + NAD(+) = sirohydrochlorin + NADH + 2 H(+). The enzyme catalyses siroheme + 2 H(+) = sirohydrochlorin + Fe(2+). Its pathway is cofactor biosynthesis; adenosylcobalamin biosynthesis; precorrin-2 from uroporphyrinogen III: step 1/1. It participates in cofactor biosynthesis; adenosylcobalamin biosynthesis; sirohydrochlorin from precorrin-2: step 1/1. It functions in the pathway porphyrin-containing compound metabolism; siroheme biosynthesis; precorrin-2 from uroporphyrinogen III: step 1/1. The protein operates within porphyrin-containing compound metabolism; siroheme biosynthesis; siroheme from sirohydrochlorin: step 1/1. Its pathway is porphyrin-containing compound metabolism; siroheme biosynthesis; sirohydrochlorin from precorrin-2: step 1/1. Functionally, multifunctional enzyme that catalyzes the SAM-dependent methylations of uroporphyrinogen III at position C-2 and C-7 to form precorrin-2 via precorrin-1. Then it catalyzes the NAD-dependent ring dehydrogenation of precorrin-2 to yield sirohydrochlorin. Finally, it catalyzes the ferrochelation of sirohydrochlorin to yield siroheme. This chain is Siroheme synthase, found in Neisseria meningitidis serogroup B (strain ATCC BAA-335 / MC58).